We begin with the raw amino-acid sequence, 195 residues long: Interferon omega-1 (195 aa).

The segment at residues 1–21 (MALLFPLLAALVMTSYSPVGS) is a signal peptide (or 23 in some molecules). 2 disulfides stabilise this stretch: Cys-24-Cys-122 and Cys-52-Cys-162. Asn-101 carries an N-linked (GlcNAc...) asparagine glycan.

The protein belongs to the alpha/beta interferon family.

It localises to the secreted. In Homo sapiens (Human), this protein is Interferon omega-1 (IFNW1).